The sequence spans 305 residues: Sulfate adenylyltransferase subunit 2 (305 aa).

It belongs to the PAPS reductase family. CysD subfamily. Heterodimer composed of CysD, the smaller subunit, and CysN.

The catalysed reaction is sulfate + ATP + H(+) = adenosine 5'-phosphosulfate + diphosphate. The protein operates within sulfur metabolism; hydrogen sulfide biosynthesis; sulfite from sulfate: step 1/3. In terms of biological role, with CysN forms the ATP sulfurylase (ATPS) that catalyzes the adenylation of sulfate producing adenosine 5'-phosphosulfate (APS) and diphosphate, the first enzymatic step in sulfur assimilation pathway. APS synthesis involves the formation of a high-energy phosphoric-sulfuric acid anhydride bond driven by GTP hydrolysis by CysN coupled to ATP hydrolysis by CysD. This chain is Sulfate adenylyltransferase subunit 2, found in Pseudomonas fluorescens (strain SBW25).